Consider the following 377-residue polypeptide: tRNA-specific 2-thiouridylase MnmA (377 aa).

ATP is bound by residues 17–24 (GMSGGVDS) and methionine 43. Residues 103 to 105 (NPD) are interaction with target base in tRNA. Cysteine 108 (nucleophile) is an active-site residue. Cysteines 108 and 204 form a disulfide. Glycine 132 provides a ligand contact to ATP. The interval 154–156 (KDQ) is interaction with tRNA. The active-site Cysteine persulfide intermediate is cysteine 204. The interaction with tRNA stretch occupies residues 316 to 317 (RY).

It belongs to the MnmA/TRMU family.

Its subcellular location is the cytoplasm. It catalyses the reaction S-sulfanyl-L-cysteinyl-[protein] + uridine(34) in tRNA + AH2 + ATP = 2-thiouridine(34) in tRNA + L-cysteinyl-[protein] + A + AMP + diphosphate + H(+). Its function is as follows. Catalyzes the 2-thiolation of uridine at the wobble position (U34) of tRNA, leading to the formation of s(2)U34. This Pseudomonas fluorescens (strain ATCC BAA-477 / NRRL B-23932 / Pf-5) protein is tRNA-specific 2-thiouridylase MnmA.